A 217-amino-acid polypeptide reads, in one-letter code: Probable transaldolase (217 aa).

Lys84 acts as the Schiff-base intermediate with substrate in catalysis.

Belongs to the transaldolase family. Type 3B subfamily.

The protein localises to the cytoplasm. It catalyses the reaction D-sedoheptulose 7-phosphate + D-glyceraldehyde 3-phosphate = D-erythrose 4-phosphate + beta-D-fructose 6-phosphate. It participates in carbohydrate degradation; pentose phosphate pathway; D-glyceraldehyde 3-phosphate and beta-D-fructose 6-phosphate from D-ribose 5-phosphate and D-xylulose 5-phosphate (non-oxidative stage): step 2/3. Transaldolase is important for the balance of metabolites in the pentose-phosphate pathway. This Roseiflexus sp. (strain RS-1) protein is Probable transaldolase.